The chain runs to 91 residues: Small ribosomal subunit protein uS17 (91 aa).

It belongs to the universal ribosomal protein uS17 family. Part of the 30S ribosomal subunit.

Its function is as follows. One of the primary rRNA binding proteins, it binds specifically to the 5'-end of 16S ribosomal RNA. The protein is Small ribosomal subunit protein uS17 of Salinispora arenicola (strain CNS-205).